The chain runs to 426 residues: Glucose-6-phosphate isomerase (426 aa).

Glu-282 acts as the Proton donor in catalysis. Residues His-303 and Lys-417 contribute to the active site.

It belongs to the GPI family.

The protein localises to the cytoplasm. It carries out the reaction alpha-D-glucose 6-phosphate = beta-D-fructose 6-phosphate. Its pathway is carbohydrate biosynthesis; gluconeogenesis. It functions in the pathway carbohydrate degradation; glycolysis; D-glyceraldehyde 3-phosphate and glycerone phosphate from D-glucose: step 2/4. In terms of biological role, catalyzes the reversible isomerization of glucose-6-phosphate to fructose-6-phosphate. The sequence is that of Glucose-6-phosphate isomerase from Aster yellows witches'-broom phytoplasma (strain AYWB).